We begin with the raw amino-acid sequence, 88 residues long: UPF0250 protein Shewmr4_0986 (88 aa).

This sequence belongs to the UPF0250 family.

The chain is UPF0250 protein Shewmr4_0986 from Shewanella sp. (strain MR-4).